The following is a 193-amino-acid chain: Phosphoheptose isomerase (193 aa).

Residues 37-193 form the SIS domain; sequence LADSFKAGGK…QLIEKEMVKA (157 aa). 52-54 is a substrate binding site; it reads NGG. Residues His61 and Glu65 each contribute to the Zn(2+) site. Substrate-binding positions include Glu65, 93–94, 119–121, Ser124, and Gln172; these read ND and STS. Residues Gln172 and His180 each contribute to the Zn(2+) site.

It belongs to the SIS family. GmhA subfamily. As to quaternary structure, homotetramer. It depends on Zn(2+) as a cofactor.

The protein localises to the cytoplasm. It catalyses the reaction 2 D-sedoheptulose 7-phosphate = D-glycero-alpha-D-manno-heptose 7-phosphate + D-glycero-beta-D-manno-heptose 7-phosphate. It functions in the pathway carbohydrate biosynthesis; D-glycero-D-manno-heptose 7-phosphate biosynthesis; D-glycero-alpha-D-manno-heptose 7-phosphate and D-glycero-beta-D-manno-heptose 7-phosphate from sedoheptulose 7-phosphate: step 1/1. Functionally, catalyzes the isomerization of sedoheptulose 7-phosphate in D-glycero-D-manno-heptose 7-phosphate. The polypeptide is Phosphoheptose isomerase (Yersinia enterocolitica serotype O:8 / biotype 1B (strain NCTC 13174 / 8081)).